Reading from the N-terminus, the 121-residue chain is Mu-hexatoxin-Mg1a (121 aa).

The N-terminal stretch at 1-20 (MMTLSPFLLLLIAAVVIGNA) is a signal peptide. Positions 21–80 (SEGEVKNEFEERLKDEFKDPSRSEVAEVILLRELEVLEETLFGKEMTSDTEENRNSREKR) are excised as a propeptide. Cystine bridges form between cysteine 81/cysteine 95, cysteine 88/cysteine 102, and cysteine 94/cysteine 116. The residue at position 120 (lysine 120) is a Lysine amide.

The protein belongs to the neurotoxin 14 (magi-1) family. 09 (magi-1) subfamily. In terms of tissue distribution, expressed by the venom gland.

It localises to the secreted. Insecticidal neurotoxin. Shows competition for site 3 of insect voltage-gated sodium channels (Nav). Induces flaccid paralysis when injected into lepidopteran larvae. Is not toxic to mice when injected intracranially at 20 pmol/g. The chain is Mu-hexatoxin-Mg1a from Macrothele gigas (Japanese funnel web spider).